A 271-amino-acid chain; its full sequence is Colicin-M (271 aa).

The short motif at 2–9 is the TonB box element; sequence ETLTVHAP.

Functionally, colicins are polypeptide toxins produced by and active against E.coli and closely related bacteria. Its function is as follows. This is a calcium-requiring inhibitor for murein biosynthesis; it causes lysis of sensitive cells accompanied by murein degradation. The target site is possibly the cytoplasmic membrane. The polypeptide is Colicin-M (cma) (Escherichia coli).